Here is a 229-residue protein sequence, read N- to C-terminus: Potassium/proton antiporter CemA (229 aa).

4 consecutive transmembrane segments (helical) span residues 7-27, 114-134, 154-174, and 189-209; these read FTPLPYLASIVFLPWWISLSF, ITCFAILSGYSILGNEELVIL, ILLLTDLCIGFHSPHGWELMI, and IISGLVSTFPVILDTIFKYWI.

Belongs to the CemA family.

The protein resides in the plastid. The protein localises to the chloroplast inner membrane. It carries out the reaction K(+)(in) + H(+)(out) = K(+)(out) + H(+)(in). Its function is as follows. Contributes to K(+)/H(+) antiport activity by supporting proton efflux to control proton extrusion and homeostasis in chloroplasts in a light-dependent manner to modulate photosynthesis. Prevents excessive induction of non-photochemical quenching (NPQ) under continuous-light conditions. Indirectly promotes efficient inorganic carbon uptake into chloroplasts. The polypeptide is Potassium/proton antiporter CemA (Platanus occidentalis (Sycamore)).